A 377-amino-acid chain; its full sequence is Erythronate-4-phosphate dehydrogenase (377 aa).

Residues serine 45 and threonine 67 each coordinate substrate. NAD(+) contacts are provided by residues aspartate 147, 210–212 (ASR), and aspartate 236. Arginine 212 is an active-site residue. Residue glutamate 241 is part of the active site. The Proton donor role is filled by histidine 258. Glycine 261 contacts NAD(+). Tyrosine 262 provides a ligand contact to substrate.

The protein belongs to the D-isomer specific 2-hydroxyacid dehydrogenase family. PdxB subfamily. Homodimer.

The protein localises to the cytoplasm. The enzyme catalyses 4-phospho-D-erythronate + NAD(+) = (R)-3-hydroxy-2-oxo-4-phosphooxybutanoate + NADH + H(+). It functions in the pathway cofactor biosynthesis; pyridoxine 5'-phosphate biosynthesis; pyridoxine 5'-phosphate from D-erythrose 4-phosphate: step 2/5. Its function is as follows. Catalyzes the oxidation of erythronate-4-phosphate to 3-hydroxy-2-oxo-4-phosphonooxybutanoate. The protein is Erythronate-4-phosphate dehydrogenase of Aeromonas salmonicida (strain A449).